The chain runs to 195 residues: Large ribosomal subunit protein bL32m (195 aa).

Zn(2+) is bound by residues C95, C98, C108, and C111.

This sequence belongs to the bacterial ribosomal protein bL32 family. As to quaternary structure, component of the mitochondrial large ribosomal subunit (mt-LSU).

It is found in the mitochondrion. In terms of biological role, component of the mitochondrial large ribosomal subunit (mt-LSU). The mitochondrial ribosome (mitoribosome) is a large ribonucleoprotein complex responsible for the synthesis of proteins inside mitochondria. The chain is Large ribosomal subunit protein bL32m (mRpL32) from Drosophila melanogaster (Fruit fly).